Consider the following 197-residue polypeptide: Nucleoid occlusion factor SlmA (197 aa).

The 61-residue stretch at 7–67 (INRREHILQC…GLIEFIEESL (61 aa)) folds into the HTH tetR-type domain. A DNA-binding region (H-T-H motif) is located at residues 30 to 49 (TTAKLASEVGVSEAALYRHF).

This sequence belongs to the nucleoid occlusion factor SlmA family. Homodimer. Interacts with FtsZ.

The protein localises to the cytoplasm. The protein resides in the nucleoid. Its function is as follows. Required for nucleoid occlusion (NO) phenomenon, which prevents Z-ring formation and cell division over the nucleoid. Acts as a DNA-associated cell division inhibitor that binds simultaneously chromosomal DNA and FtsZ, and disrupts the assembly of FtsZ polymers. SlmA-DNA-binding sequences (SBS) are dispersed on non-Ter regions of the chromosome, preventing FtsZ polymerization at these regions. This is Nucleoid occlusion factor SlmA from Shewanella sp. (strain MR-7).